Consider the following 323-residue polypeptide: Sphingolipid delta(4)-desaturase/C4-monooxygenase DES2 (323 aa).

Gly2 carries N-myristoyl glycine lipidation. The next 2 membrane-spanning stretches (helical) occupy residues 41–61 and 68–88; these read PNIK…CWLV and WLLF…TLAI. Residues 89–93 carry the Histidine box-1 motif; sequence HDISH. Positions 95-99 are required for C4-hydroxylase activity; it reads TAFGT. Positions 128-132 match the Histidine box-2 motif; that stretch reads HVDHH. A helical membrane pass occupies residues 200–220; sequence IFALWGIKAIVYLLASSLLGL. The Histidine box-3 signature appears at 259 to 263; it reads HVEHH.

This sequence belongs to the fatty acid desaturase type 1 family. DEGS subfamily.

The protein localises to the endoplasmic reticulum membrane. The catalysed reaction is a dihydroceramide + 2 Fe(II)-[cytochrome b5] + O2 + 2 H(+) = a phytoceramide + 2 Fe(III)-[cytochrome b5] + H2O. The enzyme catalyses an N-acylsphinganine + 2 Fe(II)-[cytochrome b5] + O2 + 2 H(+) = an N-acylsphing-4-enine + 2 Fe(III)-[cytochrome b5] + 2 H2O. It carries out the reaction N-octanoylsphinganine + 2 Fe(II)-[cytochrome b5] + O2 + 2 H(+) = N-octanoyl-4-hydroxysphinganine + 2 Fe(III)-[cytochrome b5] + H2O. It catalyses the reaction an N-acylsphinganine + 2 Fe(II)-[cytochrome b5] + O2 + 2 H(+) = an N-acyl-(4R)-4-hydroxysphinganine + 2 Fe(III)-[cytochrome b5] + H2O. It participates in membrane lipid metabolism; sphingolipid biosynthesis. Bifunctional enzyme which acts both as a sphingolipid delta(4)-desaturase and a sphingolipid C4-monooxygenase. The sequence is that of Sphingolipid delta(4)-desaturase/C4-monooxygenase DES2 from Rattus norvegicus (Rat).